A 262-amino-acid chain; its full sequence is Apolipoprotein A-I-2 (262 aa).

Residues 1–18 (MQFLALALTILLAAATQA) form the signal peptide. Positions 32-63 (VKVAMMEYMAQVKETAQRSIDHLDDTEYKEYK) are 3 X approximate tandem repeats. Tandem repeats lie at residues 64–85 (VQLSQSLDNLQQYAQTASESLA) and 87–107 (YSEAIGVQLTEATAAVRAEVM). The interval 64–262 (VQLSQSLDNL…YETISQAMKA (199 aa)) is 10 X approximate tandem repeats. Residues 108–118 (KDVEELRSQLE) form a 3; half-length repeat. 5 tandem repeats follow at residues 119–140 (PKRAELKEVLDKHIDEYRKRLE), 141–162 (PLIKDIVEQRRTELEAFRVKIE), 163–184 (PVVEEMRAKVSANVEETKAKLM), 185–206 (PIVETVRAKLTERLEELRTLAS), and 207–228 (PYAEEYKEQMVKAVGEVREKVV). Residues 229 to 239 (PLTTDFKGQLG) form a 9; half-length repeat. The stretch at 240–262 (PAAEQAKEKLMALYETISQAMKA) is repeat 10.

This sequence belongs to the apolipoprotein A1/A4/E family.

It is found in the secreted. In terms of biological role, participates in the reverse transport of cholesterol from tissues to the liver for excretion by promoting cholesterol efflux from tissues and by acting as a cofactor for the lecithin cholesterol acyltransferase (LCAT). This chain is Apolipoprotein A-I-2, found in Oncorhynchus mykiss (Rainbow trout).